We begin with the raw amino-acid sequence, 295 residues long: Nucleotide-binding protein YjiE (295 aa).

12-19 contributes to the ATP binding site; the sequence is GMSGAGKT. 63–66 contacts GTP; sequence DMRS.

Belongs to the RapZ-like family.

Its function is as follows. Displays ATPase and GTPase activities. The chain is Nucleotide-binding protein YjiE (yjiE) from Lactococcus lactis subsp. lactis (strain IL1403) (Streptococcus lactis).